A 433-amino-acid polypeptide reads, in one-letter code: C2H2 type master regulator of conidiophore development brlA (433 aa).

Disordered regions lie at residues 24 to 49, 240 to 269, and 286 to 306; these read SDCP…LYSQ, KSHT…ISGH, and MMQR…LRSN. Residues 30–49 are compositionally biased toward low complexity; the sequence is TSSFSPLDSPTPTPTSLYSQ. The segment covering 240-264 has biased composition (polar residues); the sequence is KSHTPSTPHRSVSMGTPSGSDTPVS. The segment covering 288-302 has biased composition (basic residues); the sequence is QRHRQPSRKPSKKQL. 2 consecutive C2H2-type zinc fingers follow at residues 321 to 345 and 351 to 376; these read FKCK…MKSH and HVCW…TKTH. The tract at residues 391–423 is disordered; that stretch reads ETSQDFDPDFRGQLTPDGRPIYGSKLEDSMPDC.

The protein localises to the nucleus. Functionally, brlA, abaA and wetA are pivotal regulators of conidiophore development and conidium maturation. They act individually and together to regulate their own expression and that of numerous other sporulation-specific genes. Binds promoters of target genes at brlA response elements (BREs) containing the conserved sequence 5'-(C/A)(A/G)AGGG(G/A)-3'. Regulates genes involved in conidiogenesis. The sequence is that of C2H2 type master regulator of conidiophore development brlA from Penicillium digitatum (strain PHI26 / CECT 20796) (Green mold).